Here is a 121-residue protein sequence, read N- to C-terminus: uncharacterized protein (121 aa).

Residues 43-86 form the CHCH domain; it reads LKECSSHVAAFADCSKDKYISVVWECRELQQLMKNCLVEYTTSE. 2 short sequence motifs (cx9C motif) span residues 46 to 56 and 68 to 78; these read CSSHVAAFADC and CRELQQLMKNC. Disulfide bonds link Cys-46–Cys-78 and Cys-56–Cys-68.

The protein belongs to the CMC family.

This is an uncharacterized protein from Dictyostelium discoideum (Social amoeba).